A 346-amino-acid polypeptide reads, in one-letter code: Cell division protein ZipA (346 aa).

The Periplasmic portion of the chain corresponds to 1 to 6 (MEDLQL). Residues 7–27 (VLFVLGAIAIVAVLVHGFWSI) form a helical membrane-spanning segment. Topologically, residues 28–346 (RRQQPKSLKD…DYLHRIRANA (319 aa)) are cytoplasmic. Disordered regions lie at residues 76-103 (ANEA…QPVE) and 121-145 (QPDF…RQEP).

It belongs to the ZipA family. As to quaternary structure, interacts with FtsZ via their C-terminal domains.

It is found in the cell inner membrane. In terms of biological role, essential cell division protein that stabilizes the FtsZ protofilaments by cross-linking them and that serves as a cytoplasmic membrane anchor for the Z ring. Also required for the recruitment to the septal ring of downstream cell division proteins. The protein is Cell division protein ZipA of Shewanella sp. (strain MR-7).